A 670-amino-acid polypeptide reads, in one-letter code: Serine/threonine-rich protein adg2 (670 aa).

The N-terminal stretch at 1-19 is a signal peptide; the sequence is MRRLTISGLLISLAKLCAG. N-linked (GlcNAc...) asparagine glycans are attached at residues Asn-77, Asn-159, Asn-204, Asn-224, Asn-274, Asn-297, Asn-327, Asn-351, Asn-370, Asn-381, Asn-405, Asn-424, Asn-435, Asn-459, Asn-478, Asn-489, and Asn-513. Residues 526 to 651 are disordered; the sequence is GSVSSFSSSP…MSLPPSAGSS (126 aa).

The protein localises to the secreted. The protein resides in the endoplasmic reticulum. The sequence is that of Serine/threonine-rich protein adg2 (adg2) from Schizosaccharomyces pombe (strain 972 / ATCC 24843) (Fission yeast).